A 263-amino-acid polypeptide reads, in one-letter code: Hydroxyacylglutathione hydrolase (263 aa).

Zn(2+)-binding residues include His55, His57, Asp59, His60, His117, Asp134, and His172.

It belongs to the metallo-beta-lactamase superfamily. Glyoxalase II family. As to quaternary structure, monomer. It depends on Zn(2+) as a cofactor.

The catalysed reaction is an S-(2-hydroxyacyl)glutathione + H2O = a 2-hydroxy carboxylate + glutathione + H(+). It functions in the pathway secondary metabolite metabolism; methylglyoxal degradation; (R)-lactate from methylglyoxal: step 2/2. Thiolesterase that catalyzes the hydrolysis of S-D-lactoyl-glutathione to form glutathione and D-lactic acid. The chain is Hydroxyacylglutathione hydrolase from Shewanella baltica (strain OS185).